Here is a 469-residue protein sequence, read N- to C-terminus: 2-oxoisovalerate dehydrogenase subunit beta, mitochondrial (469 aa).

A mitochondrion-targeting transit peptide spans 1–40; the sequence is MKRSTVVIRPSARALSRQASSQSFLLARSSALTSRQRRLY. Tyrosine 167 contributes to the thiamine diphosphate binding site. Residues glycine 194, leucine 196, and threonine 197 each contribute to the K(+) site.

In terms of assembly, heterotetramer of 2 alpha and 2 beta chains. Requires thiamine diphosphate as cofactor.

The protein localises to the mitochondrion matrix. It carries out the reaction N(6)-[(R)-lipoyl]-L-lysyl-[protein] + 3-methyl-2-oxobutanoate + H(+) = N(6)-[(R)-S(8)-2-methylpropanoyldihydrolipoyl]-L-lysyl-[protein] + CO2. Its function is as follows. The branched-chain alpha-keto dehydrogenase complex catalyzes the overall conversion of alpha-keto acids to acyl-CoA and CO(2). It contains multiple copies of three enzymatic components: branched-chain alpha-keto acid decarboxylase (E1), lipoamide acyltransferase (E2) and lipoamide dehydrogenase (E3). The polypeptide is 2-oxoisovalerate dehydrogenase subunit beta, mitochondrial (Chaetomium thermophilum (strain DSM 1495 / CBS 144.50 / IMI 039719) (Thermochaetoides thermophila)).